The chain runs to 552 residues: E3 ubiquitin-protein ligase MGRN1 (552 aa).

A lipid anchor (N-myristoyl glycine) is attached at Gly-2. The segment at Cys-278–Arg-317 adopts an RING-type zinc-finger fold. The segment at Ser-355–Pro-384 is disordered. Positions Pro-406 to Pro-409 match the Required for TSG101-binding motif. Residue Tyr-411 is modified to Phosphotyrosine. The interval Ser-439–Glu-552 is disordered. Residues Ala-450 to Ser-460 show a composition bias toward polar residues. Over residues Glu-464–Asp-475 the composition is skewed to acidic residues. Ser-471 bears the Phosphoserine mark. Residues Ser-504–Ser-523 show a composition bias toward polar residues. Ser-524 is subject to Phosphoserine.

Interacts with MC1R and MC4R, but not with TBXA2R. Interacts with TSG101. Interacts with mislocalized cytosolically exposed PRNP; this interaction alters MGRN1 subcellular location and causes lysosomal enlargement. Autoubiquitinated in vitro.

The protein resides in the early endosome. It is found in the cytoplasm. The protein localises to the cytosol. It localises to the nucleus. Its subcellular location is the cell membrane. It carries out the reaction S-ubiquitinyl-[E2 ubiquitin-conjugating enzyme]-L-cysteine + [acceptor protein]-L-lysine = [E2 ubiquitin-conjugating enzyme]-L-cysteine + N(6)-ubiquitinyl-[acceptor protein]-L-lysine.. It functions in the pathway protein modification; protein ubiquitination. Functionally, E3 ubiquitin-protein ligase. Mediates monoubiquitination at multiple sites of TSG101 in the presence of UBE2D1, but not of UBE2G1, nor UBE2H. Plays a role in the regulation of endosome-to-lysosome trafficking. Impairs MC1R- and MC4R-signaling by competing with GNAS-binding to MCRs and inhibiting agonist-induced cAMP production. Does not inhibit ADRB2-signaling. Does not promote MC1R ubiquitination. Acts also as a negative regulator of hedgehog signaling. The chain is E3 ubiquitin-protein ligase MGRN1 (MGRN1) from Homo sapiens (Human).